A 1341-amino-acid polypeptide reads, in one-letter code: DNA-directed RNA polymerase subunit Rpo1N (1341 aa).

Residues cysteine 62, cysteine 65, cysteine 72, histidine 75, cysteine 102, cysteine 105, cysteine 149, and cysteine 152 each coordinate Zn(2+). Positions 918, 920, and 922 each coordinate Mg(2+).

Belongs to the RNA polymerase beta' chain family. As to quaternary structure, part of the RNA polymerase complex. Requires Mg(2+) as cofactor. Zn(2+) is required as a cofactor. This protein undergoes a protein self splicing that involves a post-translational excision of the intervening region (intein) followed by peptide ligation.

Its subcellular location is the cytoplasm. It catalyses the reaction RNA(n) + a ribonucleoside 5'-triphosphate = RNA(n+1) + diphosphate. DNA-dependent RNA polymerase (RNAP) catalyzes the transcription of DNA into RNA using the four ribonucleoside triphosphates as substrates. Forms the clamp head domain. The protein is DNA-directed RNA polymerase subunit Rpo1N of Methanocaldococcus jannaschii (strain ATCC 43067 / DSM 2661 / JAL-1 / JCM 10045 / NBRC 100440) (Methanococcus jannaschii).